Reading from the N-terminus, the 102-residue chain is Small ribosomal subunit protein uS10 (102 aa).

It belongs to the universal ribosomal protein uS10 family. As to quaternary structure, part of the 30S ribosomal subunit.

In terms of biological role, involved in the binding of tRNA to the ribosomes. This chain is Small ribosomal subunit protein uS10, found in Thermoanaerobacter pseudethanolicus (strain ATCC 33223 / 39E) (Clostridium thermohydrosulfuricum).